A 153-amino-acid chain; its full sequence is Aspartate carbamoyltransferase regulatory chain (153 aa).

4 residues coordinate Zn(2+): Cys110, Cys115, Cys138, and Cys141.

Belongs to the PyrI family. In terms of assembly, contains catalytic and regulatory chains. The cofactor is Zn(2+).

Functionally, involved in allosteric regulation of aspartate carbamoyltransferase. The sequence is that of Aspartate carbamoyltransferase regulatory chain from Bacteroides fragilis (strain ATCC 25285 / DSM 2151 / CCUG 4856 / JCM 11019 / LMG 10263 / NCTC 9343 / Onslow / VPI 2553 / EN-2).